A 191-amino-acid polypeptide reads, in one-letter code: A-type ATP synthase subunit E 1 (191 aa).

Belongs to the V-ATPase E subunit family. In terms of assembly, has multiple subunits with at least A(3), B(3), C, D, E, F, H, I and proteolipid K(x).

Its subcellular location is the cell membrane. Functionally, component of the A-type ATP synthase that produces ATP from ADP in the presence of a proton gradient across the membrane. The polypeptide is A-type ATP synthase subunit E 1 (Methanospirillum hungatei JF-1 (strain ATCC 27890 / DSM 864 / NBRC 100397 / JF-1)).